Here is a 154-residue protein sequence, read N- to C-terminus: Large ribosomal subunit protein bL19 (154 aa).

The interval 1 to 33 is disordered; the sequence is MAADPKDTTVTDENTETAATAEVETVASAPTSP. The segment covering 16–27 has biased composition (low complexity); that stretch reads ETAATAEVETVA.

It belongs to the bacterial ribosomal protein bL19 family.

Functionally, this protein is located at the 30S-50S ribosomal subunit interface and may play a role in the structure and function of the aminoacyl-tRNA binding site. This chain is Large ribosomal subunit protein bL19, found in Parasynechococcus marenigrum (strain WH8102).